The primary structure comprises 398 residues: Sphingosine 1-phosphate receptor 5 (398 aa).

Residues 1–40 (MEPGLLRPAPVSEVIVLHYNYTGKLRGARYQPGAGLRADA) lie on the Extracellular side of the membrane. A glycan (N-linked (GlcNAc...) asparagine) is linked at asparagine 20. The chain crosses the membrane as a helical span at residues 41-61 (VVCLAVCALIVLENLAVLVVL). Over 62-70 (GRHPRFHAP) the chain is Cytoplasmic. The chain crosses the membrane as a helical span at residues 71–91 (MFLLLGSLTLSDLLAGAAYAA). The Extracellular segment spans residues 92 to 111 (NILLSGPLTLRLSPALWFAR). A helical transmembrane segment spans residues 112–132 (EGGVFVALAASVLSLLAIALE). Topologically, residues 133 to 151 (RLLTMERRGPAPAARRGRT) are cytoplasmic. The chain crosses the membrane as a helical span at residues 152-172 (LALAAGAWGVSLLLGLLPALG). Over 173 to 191 (WNCLGRLEACSTVLPLYAK) the chain is Extracellular. A helical transmembrane segment spans residues 192-212 (AYVLFCVLAFVGILAAICGLY). The Cytoplasmic segment spans residues 213–252 (ARIYCQVRAKAQRLRARPGAGEGTSARARGTPRSLALLRT). The helical transmembrane segment at 253-273 (LSVVLVAFVACWGPLFLLLLL) threads the bilayer. The Extracellular portion of the chain corresponds to 274 to 287 (DVACPARACPVLLQ). A helical membrane pass occupies residues 288-308 (ADPFLGLAMANSLLNPIIYTF). The Cytoplasmic segment spans residues 309-398 (TNRDLRHALL…QTLVPPPAAD (90 aa)). A lipid anchor (S-palmitoyl cysteine) is attached at cysteine 323. The disordered stretch occupies residues 332-398 (SGTSRSPGST…QTLVPPPAAD (67 aa)). The span at 334–343 (TSRSPGSTLG) shows a compositional bias: low complexity. Position 337 is a phosphoserine (serine 337). Over residues 359–373 (SSSRSERSSPQRDGL) the composition is skewed to basic and acidic residues. Phosphoserine is present on serine 381.

This sequence belongs to the G-protein coupled receptor 1 family.

The protein resides in the cell membrane. Receptor for the lysosphingolipid sphingosine 1-phosphate (S1P). S1P is a bioactive lysophospholipid that elicits diverse physiological effect on most types of cells and tissues. Is coupled to both the G(i/O)alpha and G(12) subclass of heteromeric G-proteins. This chain is Sphingosine 1-phosphate receptor 5 (S1PR5), found in Sus scrofa (Pig).